A 1232-amino-acid polypeptide reads, in one-letter code: DNA topoisomerase 2 (1232 aa).

ATP-binding positions include Asn65, Asn94, 122 to 124, 135 to 142, and 352 to 354; these read SSN, GRHGYGAK, and QNK. The 115-residue stretch at 432 to 546 folds into the Toprim domain; it reads RTLIVTEGDS…SLLNRNPGFI (115 aa). Positions 438, 515, and 517 each coordinate Mg(2+). Residues 681 to 1097 enclose the Topo IIA-type catalytic domain; sequence LAHAVDGLKP…APVQMWLDEL (417 aa). Tyr771 serves as the catalytic O-(5'-phospho-DNA)-tyrosine intermediate. The interval 952-961 is interaction with DNA; it reads SLTQRIYING. The tract at residues 1161–1184 is disordered; it reads YVPPPPSKRPHVGQSVGGGGGGGS. Residues 1175 to 1184 are compositionally biased toward gly residues; the sequence is SVGGGGGGGS.

Belongs to the type II topoisomerase family. Homodimer. Mg(2+) serves as cofactor. The cofactor is Mn(2+). Ca(2+) is required as a cofactor.

The protein localises to the nucleus. It carries out the reaction ATP-dependent breakage, passage and rejoining of double-stranded DNA.. Control of topological states of DNA by transient breakage and subsequent rejoining of DNA strands. Topoisomerase II makes double-strand breaks. The chain is DNA topoisomerase 2 (TOP2) from Trypanosoma cruzi.